The following is a 424-amino-acid chain: Tyrosine--tRNA ligase (424 aa).

Tyr-37 contributes to the L-tyrosine binding site. The 'HIGH' region signature appears at 42 to 51 (PTADSLHLGH). Tyr-175 and Gln-179 together coordinate L-tyrosine. The short motif at 235–239 (KFGKT) is the 'KMSKS' region element. Lys-238 contributes to the ATP binding site. The S4 RNA-binding domain occupies 357–414 (AELQKALVSAQLAPSRSQARTLIQSSSISVNGKKQLKPEYIFTSEDRLLDRYTLLRRG).

This sequence belongs to the class-I aminoacyl-tRNA synthetase family. TyrS type 1 subfamily. As to quaternary structure, homodimer.

It is found in the cytoplasm. The catalysed reaction is tRNA(Tyr) + L-tyrosine + ATP = L-tyrosyl-tRNA(Tyr) + AMP + diphosphate + H(+). In terms of biological role, catalyzes the attachment of tyrosine to tRNA(Tyr) in a two-step reaction: tyrosine is first activated by ATP to form Tyr-AMP and then transferred to the acceptor end of tRNA(Tyr). The sequence is that of Tyrosine--tRNA ligase from Hamiltonella defensa subsp. Acyrthosiphon pisum (strain 5AT).